The following is a 243-amino-acid chain: Arginine transport ATP-binding protein ArtP (243 aa).

Positions 3–242 (IRVKNLNFFY…KTEQFKHYLS (240 aa)) constitute an ABC transporter domain. Residue 35 to 42 (GPSGAGKS) participates in ATP binding.

It belongs to the ABC transporter superfamily. As to quaternary structure, the complex is composed of two ATP-binding proteins (ArtP), two transmembrane proteins (ArtM and ArtQ) and a solute-binding protein (ArtI).

The protein localises to the cell inner membrane. The catalysed reaction is a polar amino acid(out) + ATP + H2O = a polar amino acid(in) + ADP + phosphate + H(+). The enzyme catalyses L-arginine(out) + ATP + H2O = L-arginine(in) + ADP + phosphate + H(+). Its function is as follows. Part of the ABC transporter complex ArtPIQM involved in arginine transport. Probably responsible for energy coupling to the transport system. In Haemophilus influenzae (strain ATCC 51907 / DSM 11121 / KW20 / Rd), this protein is Arginine transport ATP-binding protein ArtP (artP).